The primary structure comprises 363 residues: MNKLALYCRPGFEKEVAAEITDQASHLGVFGFARVQDNSGYVIFECYQPDEADRLARDIPFNRLIFARQMIVISDLLEDLDPADRISPIVAAFEELSQQVNFAQSSELFVETADTNEAKELSTFCRKFTVPLRQALKKQGWLSAKASQKCGQFLHCFFVKPNCCYVGYSYVDNHSSHFMGIPRLKFPADAPSRSTLKLEEAILTFIPRKEENKRLNENMIGVDLGACPGGWTYQLVKRGLFVYAVDHGKMAANLHDTGRIEHCAEDGFKFQPPKRKKVDWLVCDMVEQPSRISSLIGKWLLNGWCRETIFNLKLPMKKRYQEVILCLENLAVMLAEQNLNFEIQAKHLYHDREEITVHIALKP.

S-adenosyl-L-methionine-binding positions include serine 194, 227-230, aspartate 246, aspartate 266, and aspartate 284; that span reads CPGG. The active-site Proton acceptor is the lysine 313.

This sequence belongs to the class I-like SAM-binding methyltransferase superfamily. RNA methyltransferase RlmE family. RlmM subfamily. Monomer.

It is found in the cytoplasm. It carries out the reaction cytidine(2498) in 23S rRNA + S-adenosyl-L-methionine = 2'-O-methylcytidine(2498) in 23S rRNA + S-adenosyl-L-homocysteine + H(+). In terms of biological role, catalyzes the 2'-O-methylation at nucleotide C2498 in 23S rRNA. In Haemophilus influenzae (strain PittGG), this protein is Ribosomal RNA large subunit methyltransferase M.